The chain runs to 373 residues: uncharacterized protein (373 aa).

In terms of domain architecture, CP-type G spans 14–168 (KKIVNKIIDE…LMDTPGVLEM (155 aa)). 117–124 (GYPNVGKS) provides a ligand contact to GTP.

It belongs to the TRAFAC class YlqF/YawG GTPase family.

This is an uncharacterized protein from Methanocaldococcus jannaschii (strain ATCC 43067 / DSM 2661 / JAL-1 / JCM 10045 / NBRC 100440) (Methanococcus jannaschii).